The chain runs to 489 residues: UDP-N-acetylmuramoyl-L-alanyl-D-glutamate--2,6-diaminopimelate ligase (489 aa).

S30 is a binding site for UDP-N-acetyl-alpha-D-muramoyl-L-alanyl-D-glutamate. 110 to 116 (GTNGKTT) lines the ATP pocket. Residues 152–153 (TT), S179, and R187 each bind UDP-N-acetyl-alpha-D-muramoyl-L-alanyl-D-glutamate. At K219 the chain carries N6-carboxylysine. Residues R381, 405–408 (DNPR), G458, and E462 each bind meso-2,6-diaminopimelate. The short motif at 405-408 (DNPR) is the Meso-diaminopimelate recognition motif element.

It belongs to the MurCDEF family. MurE subfamily. Mg(2+) serves as cofactor. Carboxylation is probably crucial for Mg(2+) binding and, consequently, for the gamma-phosphate positioning of ATP.

Its subcellular location is the cytoplasm. It carries out the reaction UDP-N-acetyl-alpha-D-muramoyl-L-alanyl-D-glutamate + meso-2,6-diaminopimelate + ATP = UDP-N-acetyl-alpha-D-muramoyl-L-alanyl-gamma-D-glutamyl-meso-2,6-diaminopimelate + ADP + phosphate + H(+). The protein operates within cell wall biogenesis; peptidoglycan biosynthesis. Catalyzes the addition of meso-diaminopimelic acid to the nucleotide precursor UDP-N-acetylmuramoyl-L-alanyl-D-glutamate (UMAG) in the biosynthesis of bacterial cell-wall peptidoglycan. The sequence is that of UDP-N-acetylmuramoyl-L-alanyl-D-glutamate--2,6-diaminopimelate ligase from Syntrophomonas wolfei subsp. wolfei (strain DSM 2245B / Goettingen).